The chain runs to 755 residues: Polyribonucleotide nucleotidyltransferase (755 aa).

Mg(2+) is bound by residues Asp-482 and Asp-488. The 60-residue stretch at 549 to 608 (PRMVSFYIDKDKISAAIGAKGKNIRSVCERSNAKIEIGDDGKVSVFAMSSAEAEIAKNMM) folds into the KH domain. Positions 618–686 (GAIVDVKVVK…KGGCPKLSRR (69 aa)) constitute an S1 motif domain. The segment covering 702-714 (NEEKKDSSNDRDY) has biased composition (basic and acidic residues). A disordered region spans residues 702-755 (NEEKKDSSNDRDYYNSPFNRKSGHRKRPVHSRSSFSNRNNRPKFGNDDSSSSFY). The segment covering 722–731 (KSGHRKRPVH) has biased composition (basic residues).

It belongs to the polyribonucleotide nucleotidyltransferase family. Mg(2+) is required as a cofactor.

It localises to the cytoplasm. The catalysed reaction is RNA(n+1) + phosphate = RNA(n) + a ribonucleoside 5'-diphosphate. Its function is as follows. Involved in mRNA degradation. Catalyzes the phosphorolysis of single-stranded polyribonucleotides processively in the 3'- to 5'-direction. This is Polyribonucleotide nucleotidyltransferase from Wolbachia sp. subsp. Brugia malayi (strain TRS).